The sequence spans 470 residues: uncharacterized protein (470 aa).

Residues 418–453 (SECCEEQEEKEKKKEKEKEKKKEKDDDDDQQNNNNN) are a coiled coil. Positions 423–470 (EQEEKEKKKEKEKEKKKEKDDDDDQQNNNNNDQNGLGLGLGLNFGLNL) are disordered. A compositionally biased stretch (basic and acidic residues) spans 426-441 (EKEKKKEKEKEKKKEK). A compositionally biased stretch (low complexity) spans 448 to 457 (QNNNNNDQNG).

This is an uncharacterized protein from Acidianus bottle-shaped virus (isolate Italy/Pozzuoli) (ABV).